Consider the following 337-residue polypeptide: Ornithine carbamoyltransferase (337 aa).

Carbamoyl phosphate is bound by residues 56-59 (STRT), Q83, R107, and 134-137 (HPTQ). Residues N168, D232, and 236–237 (SM) each bind L-ornithine. Residues 274 to 275 (CL) and R320 contribute to the carbamoyl phosphate site.

The protein belongs to the aspartate/ornithine carbamoyltransferase superfamily. OTCase family.

The protein resides in the cytoplasm. The catalysed reaction is carbamoyl phosphate + L-ornithine = L-citrulline + phosphate + H(+). It participates in amino-acid biosynthesis; L-arginine biosynthesis; L-arginine from L-ornithine and carbamoyl phosphate: step 1/3. Reversibly catalyzes the transfer of the carbamoyl group from carbamoyl phosphate (CP) to the N(epsilon) atom of ornithine (ORN) to produce L-citrulline. This Shigella flexneri serotype 5b (strain 8401) protein is Ornithine carbamoyltransferase.